The following is a 511-amino-acid chain: 2-isopropylmalate synthase (511 aa).

Residues 6-269 enclose the Pyruvate carboxyltransferase domain; that stretch reads IIIFDTTLRD…YTDIKCENIF (264 aa). Mn(2+)-binding residues include Asp15, His203, His205, and Asn239. Residues 394-511 are regulatory domain; that stretch reads ILEKLSVISG…SLKVEERKMA (118 aa).

It belongs to the alpha-IPM synthase/homocitrate synthase family. LeuA type 1 subfamily. Homodimer. Requires Mn(2+) as cofactor.

It localises to the cytoplasm. The catalysed reaction is 3-methyl-2-oxobutanoate + acetyl-CoA + H2O = (2S)-2-isopropylmalate + CoA + H(+). It participates in amino-acid biosynthesis; L-leucine biosynthesis; L-leucine from 3-methyl-2-oxobutanoate: step 1/4. Catalyzes the condensation of the acetyl group of acetyl-CoA with 3-methyl-2-oxobutanoate (2-ketoisovalerate) to form 3-carboxy-3-hydroxy-4-methylpentanoate (2-isopropylmalate). This chain is 2-isopropylmalate synthase, found in Campylobacter jejuni subsp. jejuni serotype O:6 (strain 81116 / NCTC 11828).